A 901-amino-acid chain; its full sequence is Protein translocase subunit SecA (901 aa).

ATP is bound by residues Gln87, 105–109 (GEGKT), and Asp512. The tract at residues 868-901 (AALAAQTGERKVGRNDPCPCGSGKKYKQCHGRLQ) is disordered. Residues Cys885, Cys887, Cys896, and His897 each contribute to the Zn(2+) site. The span at 891–901 (KKYKQCHGRLQ) shows a compositional bias: basic residues.

Belongs to the SecA family. Monomer and homodimer. Part of the essential Sec protein translocation apparatus which comprises SecA, SecYEG and auxiliary proteins SecDF-YajC and YidC. Requires Zn(2+) as cofactor.

The protein resides in the cell inner membrane. Its subcellular location is the cytoplasm. The enzyme catalyses ATP + H2O + cellular proteinSide 1 = ADP + phosphate + cellular proteinSide 2.. Functionally, part of the Sec protein translocase complex. Interacts with the SecYEG preprotein conducting channel. Has a central role in coupling the hydrolysis of ATP to the transfer of proteins into and across the cell membrane, serving both as a receptor for the preprotein-SecB complex and as an ATP-driven molecular motor driving the stepwise translocation of polypeptide chains across the membrane. The chain is Protein translocase subunit SecA from Escherichia coli O45:K1 (strain S88 / ExPEC).